The sequence spans 396 residues: MFRYLLCCFGLVLMYPTGIDMYLVGLPQIANQLGATEAQLHIAFSVYLAGMATTMLFAGSLADRIGRKPITLFSALLFALASYFAARSQSSDLFLVARFVQGVGAGCCYVVAFAILRDALDDKRRAKVLSMVNGVTCIIPVIAPVIGHLIMLRFPWPSLFYTMAVMGLLVFGLCLFVLRETYSKASFHSQTLPRVQTESFKQGFFISRVVITTLGVTTILSYVNVSPMLIMGQMGFDRGQYSNTMAMTALVSMLASFSTPFLLNQFKEKSLILFSQTLFAAAALVFILTQLGWLGQLFNLLGFGLVCSGFAIGFGVTMSQALSPFVARAGVASSLLGIAQVCTSALYIWVMGLLEVSAINILLAILAVGALISITLMLAVPKLSEMVANEQIPESA.

Residues 1 to 4 (MFRY) lie on the Cytoplasmic side of the membrane. Residues 5–25 (LLCCFGLVLMYPTGIDMYLVG) form a helical membrane-spanning segment. Over 26–41 (LPQIANQLGATEAQLH) the chain is Periplasmic. The chain crosses the membrane as a helical span at residues 42–62 (IAFSVYLAGMATTMLFAGSLA). Topologically, residues 63–64 (DR) are cytoplasmic. The helical transmembrane segment at 65 to 85 (IGRKPITLFSALLFALASYFA) threads the bilayer. At 86–92 (ARSQSSD) the chain is on the periplasmic side. A helical transmembrane segment spans residues 93–113 (LFLVARFVQGVGAGCCYVVAF). Residues 114 to 131 (AILRDALDDKRRAKVLSM) lie on the Cytoplasmic side of the membrane. A helical membrane pass occupies residues 132–152 (VNGVTCIIPVIAPVIGHLIML). Residues 153–157 (RFPWP) lie on the Periplasmic side of the membrane. The helical transmembrane segment at 158–178 (SLFYTMAVMGLLVFGLCLFVL) threads the bilayer. Residues 179–209 (RETYSKASFHSQTLPRVQTESFKQGFFISRV) are Cytoplasmic-facing. Residues 210 to 230 (VITTLGVTTILSYVNVSPMLI) traverse the membrane as a helical segment. Over 231-242 (MGQMGFDRGQYS) the chain is Periplasmic. Residues 243–263 (NTMAMTALVSMLASFSTPFLL) traverse the membrane as a helical segment. The Cytoplasmic segment spans residues 264 to 277 (NQFKEKSLILFSQT). Helical transmembrane passes span 278–298 (LFAA…GQLF) and 299–319 (NLLG…VTMS). Residues 320–333 (QALSPFVARAGVAS) lie on the Cytoplasmic side of the membrane. Residues 334 to 354 (SLLGIAQVCTSALYIWVMGLL) form a helical membrane-spanning segment. The Periplasmic segment spans residues 355–360 (EVSAIN). The chain crosses the membrane as a helical span at residues 361 to 381 (ILLAILAVGALISITLMLAVP). The Cytoplasmic segment spans residues 382-396 (KLSEMVANEQIPESA).

It belongs to the major facilitator superfamily. DHA1 family. MdtL (TC 2.A.1.2.22) subfamily.

Its subcellular location is the cell inner membrane. The sequence is that of Multidrug resistance protein MdtL from Shewanella sp. (strain ANA-3).